The chain runs to 270 residues: tRNA pseudouridine synthase A (270 aa).

The active-site Nucleophile is D60. The tract at residues 107–111 (FHARF) is RNA binding. Y118 lines the substrate pocket. An interaction with tRNA region spans residues 168 to 172 (QCQSR).

This sequence belongs to the tRNA pseudouridine synthase TruA family. As to quaternary structure, homodimer.

It carries out the reaction uridine(38/39/40) in tRNA = pseudouridine(38/39/40) in tRNA. Formation of pseudouridine at positions 38, 39 and 40 in the anticodon stem and loop of transfer RNAs. The protein is tRNA pseudouridine synthase A of Escherichia coli O9:H4 (strain HS).